The sequence spans 307 residues: Transposase InsD for insertion element IS2-9 (307 aa).

Residues 112–295 form the Integrase catalytic domain; that stretch reads KPAVPPSKRA…SPREYLRQRA (184 aa).

Involved in the transposition of the insertion sequence IS2. In Escherichia coli (strain K12), this protein is Transposase InsD for insertion element IS2-9.